The following is a 300-amino-acid chain: tRNA dimethylallyltransferase 2 (300 aa).

13–20 (GPTGVGKT) contributes to the ATP binding site. 15-20 (TGVGKT) serves as a coordination point for substrate. Positions 38 to 41 (DSRQ) are interaction with substrate tRNA.

This sequence belongs to the IPP transferase family. As to quaternary structure, monomer. Mg(2+) is required as a cofactor.

The enzyme catalyses adenosine(37) in tRNA + dimethylallyl diphosphate = N(6)-dimethylallyladenosine(37) in tRNA + diphosphate. Functionally, catalyzes the transfer of a dimethylallyl group onto the adenine at position 37 in tRNAs that read codons beginning with uridine, leading to the formation of N6-(dimethylallyl)adenosine (i(6)A). In Porphyromonas gingivalis (strain ATCC 33277 / DSM 20709 / CIP 103683 / JCM 12257 / NCTC 11834 / 2561), this protein is tRNA dimethylallyltransferase 2.